The primary structure comprises 2670 residues: Inositol 1,4,5-trisphosphate-gated calcium channel ITPR3 (2670 aa).

Topologically, residues M1–T2201 are cytoplasmic. 5 MIR domains span residues G113 to N173, G174 to F224, E232 to V288, G295 to T372, and D378 to V434. 1D-myo-inositol 1,4,5-trisphosphate-binding residues include R266, T268, L269, and R270. A disordered region spans residues P321–R344. Positions 503, 507, 510, 567, 568, and 569 each coordinate 1D-myo-inositol 1,4,5-trisphosphate. R743 is a Ca(2+) binding site. S916 and S934 each carry phosphoserine. Ca(2+)-binding residues include E1122 and E1125. The span at V1134–D1153 shows a compositional bias: basic and acidic residues. 2 disordered regions span residues V1134 to K1164 and N1807 to R1849. S1813, S1832, and S1834 each carry phosphoserine. Residues S1831 to S1842 are compositionally biased toward low complexity. Ca(2+)-binding residues include E1881 and E1945. ATP-binding residues include A1995, E2148, and K2151. A helical transmembrane segment spans residues L2202 to Y2222. At P2223–L2233 the chain is on the extracellular side. The chain crosses the membrane as a helical span at residues G2234–F2254. Residues T2255–L2263 lie on the Cytoplasmic side of the membrane. A helical transmembrane segment spans residues I2264 to L2284. The Extracellular portion of the chain corresponds to G2285–G2324. The chain crosses the membrane as a helical span at residues Y2325–F2345. Residues D2346–S2367 are Cytoplasmic-facing. Residues I2368–L2388 form a helical membrane-spanning segment. Residues F2389–Y2495 lie on the Extracellular side of the membrane. A disulfide bridge links C2454 with C2460. Residues D2496–I2516 form a helical membrane-spanning segment. The Cytoplasmic segment spans residues D2517–R2670. C2537 and F2538 together coordinate ATP. C2537 contributes to the Zn(2+) binding site. Zn(2+) contacts are provided by C2540 and H2557. Residues K2559, H2562, N2563, and M2564 each contribute to the ATP site. Zn(2+) is bound at residue H2562. T2580 contacts Ca(2+). Phosphoserine occurs at positions 2608 and 2669.

The protein belongs to the InsP3 receptor family. As to quaternary structure, homotetramer. Homodimer. Interacts with TRPC1 and TRPC3. Interacts with TRPC4. Interacts with TRPV4. Interacts with SIGMAR1. Interacts with AKT1 and PML. Interacts with IRAG2 (via coiled-coil domain). Interacts with CABP1. Interacts with TMBIM4/LFG4. Interacts with CEMIP. Interacts with TESPA1. Interacts with TMEM203. Interacts with BOK; regulates ITPR3 expression. Interacts with BCL2L10. Interacts with CHGA and CHGB. Phosphorylated by AKT1 on serine and/or threonine residues.

It is found in the endoplasmic reticulum membrane. It localises to the cytoplasmic vesicle. The protein localises to the secretory vesicle membrane. It carries out the reaction Ca(2+)(in) = Ca(2+)(out). With respect to regulation, inositol 1,4,5-trisphosphate-gated calcium channel is regulated by cytosolic calcium in a biphasic manner. At low concentrations, cytosolic calcium binds at a high-affinity juxtamembrane domain (JD) calcium binding site, allowing ITPR3 to activate by escaping a low-energy resting state through an ensemble of preactivated states. At high cytosolic calcium concentrations, ITPR3 preferentially enters an inhibited state stabilized by calcium binding at a second, low-affinity cytoplasmic domain (CD) calcium binding site. In terms of biological role, inositol 1,4,5-trisphosphate-gated calcium channel that, upon 1D-myo-inositol 1,4,5-trisphosphate binding, transports calcium from the endoplasmic reticulum lumen to cytoplasm, thus releasing the intracellular calcium and therefore participates in cellular calcium ion homeostasis. 11D-myo-inositol 1,4,5-trisphosphate binds to the ligand-free channel without altering its global conformation, yielding the low-energy resting state, then progresses through resting-to preactivated transitions to the higher energy preactivated state, which increases affinity for calcium, promoting binding of the low basal cytosolic calcium at the juxtamembrane domain (JD) site, favoring the transition through the ensemble of high-energy intermediate states along the trajectory to the fully-open activated state. Upon opening, releases calcium in the cytosol where it can bind to the low-affinity cytoplasmic domain (CD) site and stabilizes the inhibited state to terminate calcium release. This is Inositol 1,4,5-trisphosphate-gated calcium channel ITPR3 from Rattus norvegicus (Rat).